A 1211-amino-acid polypeptide reads, in one-letter code: DNA polymerase beta (1211 aa).

4 repeat units span residues 1074–1077 (KPAG), 1078–1081 (KPAG), 1082–1085 (NPAG), and 1086–1089 (NPAG). Residues 1074-1089 (KPAGKPAGNPAGNPAG) form a 4 X 4 AA tandem repeats of [NK]-[P]-A-G region.

It belongs to the DNA polymerase type-B family.

The catalysed reaction is DNA(n) + a 2'-deoxyribonucleoside 5'-triphosphate = DNA(n+1) + diphosphate. DNA-directed DNA polymerase involved in viral DNA replication. The sequence is that of DNA polymerase beta (DPOL) from African swine fever virus (strain Badajoz 1971 Vero-adapted) (Ba71V).